Consider the following 252-residue polypeptide: Type III pantothenate kinase (252 aa).

6–13 (DIGNTSTA) contributes to the ATP binding site. 104–107 (GADR) contributes to the substrate binding site. D106 acts as the Proton acceptor in catalysis. Position 128 (D128) interacts with K(+). T131 contributes to the ATP binding site. T183 is a binding site for substrate.

Belongs to the type III pantothenate kinase family. Homodimer. NH4(+) serves as cofactor. Requires K(+) as cofactor.

The protein localises to the cytoplasm. The catalysed reaction is (R)-pantothenate + ATP = (R)-4'-phosphopantothenate + ADP + H(+). Its pathway is cofactor biosynthesis; coenzyme A biosynthesis; CoA from (R)-pantothenate: step 1/5. Its function is as follows. Catalyzes the phosphorylation of pantothenate (Pan), the first step in CoA biosynthesis. The chain is Type III pantothenate kinase from Thermus thermophilus (strain ATCC 27634 / DSM 579 / HB8).